A 158-amino-acid polypeptide reads, in one-letter code: Small ribosomal subunit protein uS9 (158 aa).

Belongs to the universal ribosomal protein uS9 family.

The chain is Small ribosomal subunit protein uS9 from Brucella anthropi (strain ATCC 49188 / DSM 6882 / CCUG 24695 / JCM 21032 / LMG 3331 / NBRC 15819 / NCTC 12168 / Alc 37) (Ochrobactrum anthropi).